A 127-amino-acid polypeptide reads, in one-letter code: Small ribosomal subunit protein uS11 (127 aa).

Belongs to the universal ribosomal protein uS11 family. In terms of assembly, part of the 30S ribosomal subunit. Interacts with proteins S7 and S18. Binds to IF-3.

Functionally, located on the platform of the 30S subunit, it bridges several disparate RNA helices of the 16S rRNA. Forms part of the Shine-Dalgarno cleft in the 70S ribosome. The chain is Small ribosomal subunit protein uS11 from Rickettsia felis (strain ATCC VR-1525 / URRWXCal2) (Rickettsia azadi).